Reading from the N-terminus, the 1337-residue chain is Protein cordon-bleu (1337 aa).

The segment at 1 to 41 (MDAPRALAAKPPTGRKMKARAPPPPGKPAAQNVHSEQKLPH) is disordered. 6 positions are modified to phosphoserine: Ser47, Ser50, Ser212, Ser235, Ser272, and Ser294. Disordered stretches follow at residues 260 to 556 (SKAE…NDDE) and 647 to 768 (IASQ…HHGQ). Positions 288–317 (CVTTPNSPSLHSRSLTLGPSLSLGNISGVS) are enriched in polar residues. A KKRRAP 1 motif is present at residues 323–328 (KKRRAP). Ser346 and Ser349 each carry phosphoserine. The short motif at 356–361 (KKRRAP) is the KKRRAP 2 element. Positions 361 to 374 (PAPPPPQQPPPSPV) are enriched in pro residues. Ser372 is subject to Phosphoserine. Over residues 377–387 (NRKEDKEENRK) the composition is skewed to basic and acidic residues. Residues 411 to 423 (LVLPPPPPYPPPD) show a composition bias toward pro residues. Residues 469–480 (ESEETASEDTTE) are compositionally biased toward acidic residues. The span at 484–500 (VMSSPSDAISLDSQQDS) shows a compositional bias: polar residues. Residue Thr522 is modified to Phosphothreonine. Residues 526-541 (GPQKSPSWGKSGSGSS) show a composition bias toward low complexity. Composition is skewed to polar residues over residues 647 to 666 (IASQ…QPFV) and 687 to 710 (QPTL…TSLV). Ser649 carries the post-translational modification Phosphoserine. The segment covering 714 to 736 (LIDDPKAKDKGKVHGSSHSEKTQ) has biased composition (basic and acidic residues). Position 816 is a phosphoserine (Ser816). 2 disordered regions span residues 892–923 (TPQQ…SVKV) and 967–991 (KATT…DDAA). Position 1038 is a phosphoserine (Ser1038). Positions 1070-1090 (GFNEKQTTSNQKANSTSNFSQ) are enriched in polar residues. 4 disordered regions span residues 1070 to 1094 (GFNE…ALDK), 1113 to 1133 (MNGS…KEST), 1145 to 1168 (KPSS…FGPK), and 1192 to 1221 (AIHS…SYVE). Ser1128 carries the post-translational modification Phosphoserine. 2 WH2 domains span residues 1185–1205 (LHSA…LRKT) and 1225–1245 (ERSA…LRKV). Over residues 1197–1214 (GGREKLRKTAEQTSEGRP) the composition is skewed to basic and acidic residues. Residues 1262–1310 (GAPGLDKPQQEDLGLPPPPALPPPPAPAPQAPSASVTVSRFSTGTPSNS) are disordered. Over residues 1276 to 1291 (LPPPPALPPPPAPAPQ) the composition is skewed to pro residues. A compositionally biased stretch (polar residues) spans 1297–1310 (VTVSRFSTGTPSNS). Ser1303 is modified (phosphoserine). In terms of domain architecture, WH2 3 spans 1313–1333 (ARQALMDAIRSGTGAARLRKV).

Identified in a complex composed of COBL, PACSIN1 and WASL. Interacts with PACSIN1, PACSIN2 and PACSIN3. Identified in a complex composed of ACTA1, COBL, GSN and TMSB4X. Interacts (via WH2 domains) with actin monomers. Interacts with DBNL. As to expression, detected in brain cortex and in the Purkinje cell layer in the cerebellum. Detected in hippocampus neurons, and at lower levels in testis, lung and spleen (at protein level). Detected in embryonic neural tube.

The protein localises to the cell membrane. Its subcellular location is the cytoplasm. The protein resides in the cytoskeleton. It is found in the cell projection. It localises to the ruffle. Functionally, plays an important role in the reorganization of the actin cytoskeleton. Binds to and sequesters actin monomers (G actin). Nucleates actin polymerization by assembling three actin monomers in cross-filament orientation and thereby promotes growth of actin filaments at the barbed end. Can also mediate actin depolymerization at barbed ends and severing of actin filaments. Promotes formation of cell ruffles. Regulates neuron morphogenesis and increases branching of axons and dendrites. Regulates dendrite branching in Purkinje cells. This chain is Protein cordon-bleu (Cobl), found in Mus musculus (Mouse).